Consider the following 367-residue polypeptide: Phospho-N-acetylmuramoyl-pentapeptide-transferase (367 aa).

Transmembrane regions (helical) follow at residues 34-54 (GAVV…IDHL), 78-98 (TPTM…VLWA), 101-121 (LNPY…VGFY), 135-155 (FGSK…CYAL), 175-195 (TVLH…VGAG), 206-226 (GLAI…AYLA), 246-266 (LAVL…FNAP), 270-290 (IFMG…IAVA), 295-315 (IVLA…IVQV), and 344-364 (QIVI…LSTL).

It belongs to the glycosyltransferase 4 family. MraY subfamily. It depends on Mg(2+) as a cofactor.

It localises to the cell inner membrane. It carries out the reaction UDP-N-acetyl-alpha-D-muramoyl-L-alanyl-gamma-D-glutamyl-meso-2,6-diaminopimeloyl-D-alanyl-D-alanine + di-trans,octa-cis-undecaprenyl phosphate = di-trans,octa-cis-undecaprenyl diphospho-N-acetyl-alpha-D-muramoyl-L-alanyl-D-glutamyl-meso-2,6-diaminopimeloyl-D-alanyl-D-alanine + UMP. It participates in cell wall biogenesis; peptidoglycan biosynthesis. Catalyzes the initial step of the lipid cycle reactions in the biosynthesis of the cell wall peptidoglycan: transfers peptidoglycan precursor phospho-MurNAc-pentapeptide from UDP-MurNAc-pentapeptide onto the lipid carrier undecaprenyl phosphate, yielding undecaprenyl-pyrophosphoryl-MurNAc-pentapeptide, known as lipid I. The chain is Phospho-N-acetylmuramoyl-pentapeptide-transferase from Bradyrhizobium diazoefficiens (strain JCM 10833 / BCRC 13528 / IAM 13628 / NBRC 14792 / USDA 110).